A 347-amino-acid polypeptide reads, in one-letter code: MLEEEDFYLFKNVSNVSPFDGPQYHIAPKWAFTLQAIFMGMVFLIGTPLNFIVLLVTIKYKKLRQPLNYILVNITVGGFLMCIFSIFPVFVSSSQGYFFFGRIACSIDAFVGTLTGLVTGWSLAFLAFERYIVICKPMGNFNFSSSHALAVVICTWIIGIVVSVPPFLGWSRYMPEGLQCSCGPDWYTVGTKYRSEYYTWFIFIFCFVIPLSLICFSYGRLLGALRAVAAQQQESASTQKAEREVSRMVIFMVGSFCLCYVPYAAMAMYMVTNRNHGLDLRLVTIPAFFSKSSCVYNPIIYSFMNKQFRGCIMETVCGRPMSDDSSVSSTSQRTEVSTVSSSQVSPA.

Topologically, residues 1-31 (MLEEEDFYLFKNVSNVSPFDGPQYHIAPKWA) are extracellular. Asn12 carries an N-linked (GlcNAc...) asparagine glycan. A helical membrane pass occupies residues 32-56 (FTLQAIFMGMVFLIGTPLNFIVLLV). Over 57 to 68 (TIKYKKLRQPLN) the chain is Cytoplasmic. The chain crosses the membrane as a helical span at residues 69-94 (YILVNITVGGFLMCIFSIFPVFVSSS). The Extracellular segment spans residues 95–108 (QGYFFFGRIACSID). A disulfide bridge links Cys105 with Cys182. A helical transmembrane segment spans residues 109-128 (AFVGTLTGLVTGWSLAFLAF). Over 129 to 147 (ERYIVICKPMGNFNFSSSH) the chain is Cytoplasmic. A helical transmembrane segment spans residues 148–171 (ALAVVICTWIIGIVVSVPPFLGWS). Residues 172-197 (RYMPEGLQCSCGPDWYTVGTKYRSEY) lie on the Extracellular side of the membrane. Residues 198-225 (YTWFIFIFCFVIPLSLICFSYGRLLGAL) form a helical membrane-spanning segment. Residues 226-247 (RAVAAQQQESASTQKAEREVSR) lie on the Cytoplasmic side of the membrane. The chain crosses the membrane as a helical span at residues 248–271 (MVIFMVGSFCLCYVPYAAMAMYMV). The Extracellular portion of the chain corresponds to 272-279 (TNRNHGLD). The chain crosses the membrane as a helical span at residues 280 to 304 (LRLVTIPAFFSKSSCVYNPIIYSFM). Lys291 carries the N6-(retinylidene)lysine modification. The Cytoplasmic segment spans residues 305 to 347 (NKQFRGCIMETVCGRPMSDDSSVSSTSQRTEVSTVSSSQVSPA). A disordered region spans residues 323–347 (DDSSVSSTSQRTEVSTVSSSQVSPA).

Belongs to the G-protein coupled receptor 1 family. Opsin subfamily. In terms of processing, phosphorylated on some or all of the serine and threonine residues present in the C-terminal region. The color pigments are found in the cone photoreceptor cells.

It is found in the membrane. Its function is as follows. Visual pigments are the light-absorbing molecules that mediate vision. They consist of an apoprotein, opsin, covalently linked to cis-retinal. The sequence is that of Violet-sensitive opsin from Xenopus laevis (African clawed frog).